A 440-amino-acid chain; its full sequence is Aspartokinase (440 aa).

It belongs to the aspartokinase family.

It catalyses the reaction L-aspartate + ATP = 4-phospho-L-aspartate + ADP. It functions in the pathway amino-acid biosynthesis; L-lysine biosynthesis via DAP pathway; (S)-tetrahydrodipicolinate from L-aspartate: step 1/4. Its pathway is amino-acid biosynthesis; L-methionine biosynthesis via de novo pathway; L-homoserine from L-aspartate: step 1/3. The protein operates within amino-acid biosynthesis; L-threonine biosynthesis; L-threonine from L-aspartate: step 1/5. The polypeptide is Aspartokinase (lysC) (Chlamydia pneumoniae (Chlamydophila pneumoniae)).